A 377-amino-acid chain; its full sequence is uncharacterized protein (377 aa).

This is an uncharacterized protein from Magallana gigas (Pacific oyster).